The following is a 282-amino-acid chain: Heme oxygenase 1, chloroplastic (282 aa).

The transit peptide at 1-56 (MASATVVSQIQSLYIIKPRLSPPPPPHRQFRSIYFPTTRLLQQHRFRQMKSVVIVP) directs the protein to the chloroplast. His86 contacts heme b.

The protein belongs to the heme oxygenase family. Highly expressed in root nodules and, to a lower extent, in leaves, shoots, roots, flowers and pods (at protein level).

The protein resides in the plastid. It is found in the chloroplast. The enzyme catalyses heme b + 3 reduced [NADPH--hemoprotein reductase] + 3 O2 = biliverdin IXalpha + CO + Fe(2+) + 3 oxidized [NADPH--hemoprotein reductase] + 3 H2O + H(+). Key enzyme in the synthesis of the chromophore of the phytochrome family of plant photoreceptors. Catalyzes the opening of the heme ring to form the open-chain tetrapyrrole biliverdin IX with the release of iron and carbon monoxide (CO). Produces specifically the biliverdin IX-alpha isomer. Can form complex with heme, is ferredoxin-dependent and its activity is increased in the presence of ascorbate. May affect the plastid-to-nucleus signaling pathway by perturbing tetrapyrrole synthesis. The plastid-to-nucleus signal plays an important role in the coordinated expression of both nuclear- and chloroplast-localized genes that encode photosynthesis-related proteins. Required for efficient symbiotic nitrogen fixation (SNF) in root nodules. Responsible for heme catabolism in uninfected nodule interstitial cells (UC), preventing superoxide production under stressful conditions (e.g. nitrate exposure and darkness) and catalyzing biliverdin (BV) production in senescing green nodules. The polypeptide is Heme oxygenase 1, chloroplastic (Lotus japonicus (Lotus corniculatus var. japonicus)).